The sequence spans 202 residues: Recombination protein RecR (202 aa).

The segment at 61 to 76 (CARCNSFTEDDVCVIC) adopts a C4-type zinc-finger fold. One can recognise a Toprim domain in the interval 84 to 179 (SLLCIVETPA…KVTRLARGVP (96 aa)).

The protein belongs to the RecR family.

In terms of biological role, may play a role in DNA repair. It seems to be involved in an RecBC-independent recombinational process of DNA repair. It may act with RecF and RecO. In Bordetella avium (strain 197N), this protein is Recombination protein RecR.